We begin with the raw amino-acid sequence, 345 residues long: Biotin synthase (345 aa).

Positions R38–S256 constitute a Radical SAM core domain. Residues C53, C57, and C60 each contribute to the [4Fe-4S] cluster site. Residues C97, C128, C188, and R260 each coordinate [2Fe-2S] cluster.

This sequence belongs to the radical SAM superfamily. Biotin synthase family. Homodimer. It depends on [4Fe-4S] cluster as a cofactor. [2Fe-2S] cluster serves as cofactor.

It carries out the reaction (4R,5S)-dethiobiotin + (sulfur carrier)-SH + 2 reduced [2Fe-2S]-[ferredoxin] + 2 S-adenosyl-L-methionine = (sulfur carrier)-H + biotin + 2 5'-deoxyadenosine + 2 L-methionine + 2 oxidized [2Fe-2S]-[ferredoxin]. The protein operates within cofactor biosynthesis; biotin biosynthesis; biotin from 7,8-diaminononanoate: step 2/2. Catalyzes the conversion of dethiobiotin (DTB) to biotin by the insertion of a sulfur atom into dethiobiotin via a radical-based mechanism. The chain is Biotin synthase from Yersinia pestis bv. Antiqua (strain Antiqua).